The primary structure comprises 310 residues: Pirin-like protein At1g50590 (310 aa).

It belongs to the pirin family.

Its subcellular location is the nucleus. The sequence is that of Pirin-like protein At1g50590 from Arabidopsis thaliana (Mouse-ear cress).